The chain runs to 695 residues: Glycine--tRNA ligase beta subunit (695 aa).

Belongs to the class-II aminoacyl-tRNA synthetase family. Tetramer of two alpha and two beta subunits.

Its subcellular location is the cytoplasm. The enzyme catalyses tRNA(Gly) + glycine + ATP = glycyl-tRNA(Gly) + AMP + diphosphate. The protein is Glycine--tRNA ligase beta subunit of Lawsonia intracellularis (strain PHE/MN1-00).